A 76-amino-acid polypeptide reads, in one-letter code: Conotoxin TsMLCL-03 (76 aa).

The first 19 residues, 1-19 (MLCLPVFIILLLLASPAAP), serve as a signal peptide directing secretion. Positions 20–44 (NPLERRIQSDLIRTALEDADMKTPK) are excised as a propeptide.

This sequence belongs to the conotoxin T superfamily. Post-translationally, contains 2 disulfide bonds that can be either 'C1-C3, C2-C4' or 'C1-C4, C2-C3', since these disulfide connectivities have been observed for conotoxins with cysteine framework V (for examples, see AC P0DQQ7 and AC P81755). As to expression, expressed by the venom duct.

Its subcellular location is the secreted. The sequence is that of Conotoxin TsMLCL-03 from Conus tessulatus (Tessellate cone).